Here is a 65-residue protein sequence, read N- to C-terminus: Ubiquinol-cytochrome-c reductase complex assembly factor 6 (65 aa).

At 1-9 (MPAGVSWPR) the chain is on the mitochondrial matrix side. The chain crosses the membrane as a helical; Signal-anchor for type II membrane protein span at residues 10–32 (YLRMFAASVLSMFAGAQVVHHYY). Residues 33–65 (RPDLSIPEIPPKPGELRTELLGLKERQMDSQKQ) are Mitochondrial intermembrane-facing.

Belongs to the UQCC6 family. As to expression, highly expressed in skeletal and cardiac muscle (at protein level).

It localises to the mitochondrion inner membrane. Its function is as follows. Required for the assembly and stability of the mitochondrial ubiquinol-cytochrome c reductase complex (complex III (CIII) or cytochrome b-c1 complex), a multisubunit transmembrane complex that is part of the mitochondrial electron transport chain (ETC) which drives oxidative phosphorylation. Mediates early complex III biogenesis. Participates in regulating the levels of electron transport chain proteins, and therefore energy supply, in response to changes in energy demand. Also required for cytochrome c oxidase complex (complex IV) assembly. The chain is Ubiquinol-cytochrome-c reductase complex assembly factor 6 (uqcc6) from Danio rerio (Zebrafish).